The primary structure comprises 231 residues: Large ribosomal subunit protein uL1 (231 aa).

It belongs to the universal ribosomal protein uL1 family. Part of the 50S ribosomal subunit.

In terms of biological role, binds directly to 23S rRNA. The L1 stalk is quite mobile in the ribosome, and is involved in E site tRNA release. Protein L1 is also a translational repressor protein, it controls the translation of the L11 operon by binding to its mRNA. The sequence is that of Large ribosomal subunit protein uL1 from Shouchella clausii (strain KSM-K16) (Alkalihalobacillus clausii).